We begin with the raw amino-acid sequence, 85 residues long: UPF0335 protein Atu3758 (85 aa).

Belongs to the UPF0335 family.

This chain is UPF0335 protein Atu3758, found in Agrobacterium fabrum (strain C58 / ATCC 33970) (Agrobacterium tumefaciens (strain C58)).